A 150-amino-acid chain; its full sequence is Transcriptional regulator MraZ (150 aa).

2 consecutive SpoVT-AbrB domains span residues 5-52 and 81-124; these read VTHL…PLPD and AHDL…DAEA.

This sequence belongs to the MraZ family. In terms of assembly, forms oligomers.

The protein localises to the cytoplasm. Its subcellular location is the nucleoid. This is Transcriptional regulator MraZ from Alkalilimnicola ehrlichii (strain ATCC BAA-1101 / DSM 17681 / MLHE-1).